A 224-amino-acid polypeptide reads, in one-letter code: Charged multivesicular body protein 4b (224 aa).

The tract at residues 1-23 (MSVFGKLFGAGGGKAGKGGPTPQ) is disordered. S2 is subject to N-acetylserine. An intramolecular interaction with C-terminus region spans residues 2–153 (SVFGKLFGAG…EISTAISKPV (152 aa)). K6 is subject to N6-acetyllysine. Positions 8–19 (FGAGGGKAGKGG) are enriched in gly residues. Residues 23–183 (QEAIQRLRDT…EELDKNLLEI (161 aa)) are a coiled coil. Residue K114 is modified to N6-acetyllysine. An intramolecular interaction with N-terminus region spans residues 154 to 224 (GFGEEFDEDE…KELENWAGSM (71 aa)). 2 positions are modified to phosphoserine: S184 and S223. Residues 185-224 (GPETVPLPNVPSVALPSKPAKKKEEEDDDMKELENWAGSM) form a disordered region.

This sequence belongs to the SNF7 family. Probable core component of the endosomal sorting required for transport complex III (ESCRT-III). ESCRT-III components are thought to multimerize to form a flat lattice on the perimeter membrane of the endosome. Several assembly forms of ESCRT-III may exist that interact and act sequentially. Interacts with CHMP6 and CHMP4C. Interacts with PDCD6IP; the interaction is direct. Interacts with VPS4A; the interaction is direct. Interacts with VPS4B; the interaction is direct. Interacts with CHMP7. Interacts with CFTR; the interaction requires misfolded CFTR. Interacts with PTPN23. Interacts with CC2D1B. Post-translationally, ISGylated. Isgylation weakens its interaction with VPS4A.

Its subcellular location is the cytoplasm. It is found in the cytosol. The protein resides in the late endosome membrane. It localises to the midbody. The protein localises to the nucleus envelope. Probable core component of the endosomal sorting required for transport complex III (ESCRT-III) which is involved in multivesicular bodies (MVBs) formation and sorting of endosomal cargo proteins into MVBs. MVBs contain intraluminal vesicles (ILVs) that are generated by invagination and scission from the limiting membrane of the endosome and mostly are delivered to lysosomes enabling degradation of membrane proteins, such as stimulated growth factor receptors, lysosomal enzymes and lipids. The MVB pathway appears to require the sequential function of ESCRT-O, -I,-II and -III complexes. ESCRT-III proteins mostly dissociate from the invaginating membrane before the ILV is released. The ESCRT machinery also functions in topologically equivalent membrane fission events, such as the terminal stages of cytokinesis. Together with SPAST, the ESCRT-III complex promotes nuclear envelope sealing and mitotic spindle disassembly during late anaphase. Plays a role in the endosomal sorting pathway. ESCRT-III proteins are believed to mediate the necessary vesicle extrusion and/or membrane fission activities, possibly in conjunction with the AAA ATPase VPS4. When overexpressed, membrane-assembled circular arrays of CHMP4B filaments can promote or stabilize negative curvature and outward budding. CHMP4A/B/C are required for the exosomal release of SDCBP, CD63 and syndecan. Majority of the protein exists in a folded closed conformation. The polypeptide is Charged multivesicular body protein 4b (Chmp4b) (Mus musculus (Mouse)).